We begin with the raw amino-acid sequence, 328 residues long: Tetraacyldisaccharide 4'-kinase (328 aa).

55 to 62 (TAGGNGKT) contacts ATP.

Belongs to the LpxK family.

It catalyses the reaction a lipid A disaccharide + ATP = a lipid IVA + ADP + H(+). It functions in the pathway glycolipid biosynthesis; lipid IV(A) biosynthesis; lipid IV(A) from (3R)-3-hydroxytetradecanoyl-[acyl-carrier-protein] and UDP-N-acetyl-alpha-D-glucosamine: step 6/6. In terms of biological role, transfers the gamma-phosphate of ATP to the 4'-position of a tetraacyldisaccharide 1-phosphate intermediate (termed DS-1-P) to form tetraacyldisaccharide 1,4'-bis-phosphate (lipid IVA). The sequence is that of Tetraacyldisaccharide 4'-kinase from Escherichia coli O81 (strain ED1a).